The sequence spans 370 residues: Phosphate-binding protein PstS2 (370 aa).

An N-terminal signal peptide occupies residues 1 to 22 (MKFARSGAAVSLLAAGTLVLTA). Cys23 carries N-palmitoyl cysteine lipidation. Cys23 is lipidated: S-diacylglycerol cysteine. Residues 54–56 (STA), Ser84, Asp102, and 191–193 (SGT) each bind phosphate.

This sequence belongs to the PstS family. As to quaternary structure, the complex is composed of two ATP-binding proteins (PstB), two transmembrane proteins (PstC and PstA) and a solute-binding protein (PstS).

The protein resides in the cell membrane. It localises to the secreted. Its function is as follows. Functions in inorganic phosphate uptake, a phosphate-binding protein, although probably not the main uptake protein under phosphate starvation. Part of the ABC transporter complex PstSACB involved in phosphate import. The protein is Phosphate-binding protein PstS2 (pstS2) of Mycobacterium bovis (strain BCG / Pasteur 1173P2).